We begin with the raw amino-acid sequence, 340 residues long: Ribosomal RNA small subunit methyltransferase C (340 aa).

Belongs to the methyltransferase superfamily. RsmC family. As to quaternary structure, monomer.

It is found in the cytoplasm. The enzyme catalyses guanosine(1207) in 16S rRNA + S-adenosyl-L-methionine = N(2)-methylguanosine(1207) in 16S rRNA + S-adenosyl-L-homocysteine + H(+). Its function is as follows. Specifically methylates the guanine in position 1207 of 16S rRNA in the 30S particle. This Vibrio vulnificus (strain CMCP6) protein is Ribosomal RNA small subunit methyltransferase C.